The chain runs to 495 residues: ATP-dependent RNA helicase dbp3 (495 aa).

Basic and acidic residues predominate over residues 1–14 (MAKRELQDKGSTEH). A disordered region spans residues 1-49 (MAKRELQDKGSTEHRAKKKSRNEKHTKKAEDSQASAQSSETQYTDPKEP). Positions 15-27 (RAKKKSRNEKHTK) are enriched in basic residues. The Q motif signature appears at 97 to 105 (SFTSPTAIQ). In terms of domain architecture, Helicase ATP-binding spans 109 to 284 (WPFLFSGRDV…ATFMTSPVTV (176 aa)). ATP is bound at residue 122-129 (AETGSGKT). The DEAD box motif lies at 231–234 (DEAD). A Helicase C-terminal domain is found at 315–464 (RLVQLLNKYQ…DVPEDLLKFG (150 aa)).

The protein belongs to the DEAD box helicase family. DDX5/DBP2 subfamily.

The protein localises to the nucleus. It is found in the nucleolus. It carries out the reaction ATP + H2O = ADP + phosphate + H(+). ATP-dependent RNA helicase required for 60S ribosomal subunit synthesis. Involved in efficient pre-rRNA processing, predominantly at site A3, which is necessary for the normal formation of 25S and 5.8S rRNAs. The chain is ATP-dependent RNA helicase dbp3 (dbp3) from Aspergillus niger (strain ATCC MYA-4892 / CBS 513.88 / FGSC A1513).